Here is an 82-residue protein sequence, read N- to C-terminus: Bowman-Birk type proteinase inhibitor (82 aa).

Residues 1-24 (SGHHDETTDEPSESSKPCCDQCSC) are disordered. Cystine bridges form between C18-C72, C19-C34, C22-C68, C24-C32, C42-C49, C46-C61, and C51-C59.

The protein belongs to the Bowman-Birk serine protease inhibitor family.

Functionally, trypsin and chymotrypsin are inhibited simultaneously. There are two separate reactive sites for trypsin and chymotrypsin but they do not inhibit simultaneously. The sequence is that of Bowman-Birk type proteinase inhibitor from Phaseolus angularis (Azuki bean).